A 104-amino-acid chain; its full sequence is U20-lycotoxin-Ls1a (104 aa).

The first 30 residues, 1 to 30, serve as a signal peptide directing secretion; the sequence is MFSTSDQVSKMNSRILSALLILGIATCVIA. The region spanning 31-76 is the WAP domain; the sequence is GGFCPKSRHPQCNLSYKINDCCAQSDCRVGSVCCVEGCGNVCRAES. Disulfide bonds link cysteine 34–cysteine 64, cysteine 42–cysteine 68, cysteine 51–cysteine 63, cysteine 52–cysteine 90, and cysteine 57–cysteine 72.

It belongs to the venom protein 11 family. 02 (wap-2) subfamily. Contains 5 disulfide bonds. Expressed by the venom gland.

It is found in the secreted. In terms of biological role, has antibacterial activity. This chain is U20-lycotoxin-Ls1a, found in Lycosa singoriensis (Wolf spider).